A 369-amino-acid polypeptide reads, in one-letter code: Serine/threonine-protein kinase srb10 (369 aa).

Residues 5-319 (YKIIGFISSG…AKQALEHVFF (315 aa)) form the Protein kinase domain. ATP is bound by residues 11-19 (ISSGTYGKV) and Lys-36. Catalysis depends on Asp-140, which acts as the Proton acceptor.

The protein belongs to the protein kinase superfamily. CMGC Ser/Thr protein kinase family. CDC2/CDKX subfamily. In terms of assembly, component of the Cdk8 module of the Mediator complex. The Cdk8 module is composed of srb8, srb9, srb10 and srb11. Interacts with med17 and med18.

The protein localises to the nucleus. The catalysed reaction is L-seryl-[protein] + ATP = O-phospho-L-seryl-[protein] + ADP + H(+). The enzyme catalyses L-threonyl-[protein] + ATP = O-phospho-L-threonyl-[protein] + ADP + H(+). It catalyses the reaction [DNA-directed RNA polymerase] + ATP = phospho-[DNA-directed RNA polymerase] + ADP + H(+). Catalytic component of the Cdk8 module/Srb8-11 module which is a regulatory module of the Mediator complex that regulates basal RNA polymerase II transcription. The Cdk8 module may sterically hinder the interaction between Mediator and RNA polymerase II leading to transcriptional repression of a subset of genes regulated by Mediator. This is Serine/threonine-protein kinase srb10 (srb10) from Schizosaccharomyces pombe (strain 972 / ATCC 24843) (Fission yeast).